The primary structure comprises 190 residues: Segregation and condensation protein B (190 aa).

Belongs to the ScpB family. In terms of assembly, homodimer. Homodimerization may be required to stabilize the binding of ScpA to the Smc head domains. Component of a cohesin-like complex composed of ScpA, ScpB and the Smc homodimer, in which ScpA and ScpB bind to the head domain of Smc. The presence of the three proteins is required for the association of the complex with DNA.

Its subcellular location is the cytoplasm. Participates in chromosomal partition during cell division. May act via the formation of a condensin-like complex containing Smc and ScpA that pull DNA away from mid-cell into both cell halves. This is Segregation and condensation protein B from Bacillus cereus (strain ATCC 10987 / NRS 248).